A 47-amino-acid polypeptide reads, in one-letter code: Small, acid-soluble spore protein N (47 aa).

Residues 1–47 (MSNPRGNPKYFNPNHLGTQPRAAGGNKGKKMQDQSGQHAQVIQTKGE) form a disordered region. Over residues 33-47 (DQSGQHAQVIQTKGE) the composition is skewed to polar residues.

This sequence belongs to the SspN family.

Its subcellular location is the spore core. This chain is Small, acid-soluble spore protein N, found in Geobacillus sp. (strain WCH70).